A 110-amino-acid chain; its full sequence is Iron-sulfur cluster assembly protein CyaY (110 aa).

The protein belongs to the frataxin family.

Involved in iron-sulfur (Fe-S) cluster assembly. May act as a regulator of Fe-S biogenesis. The chain is Iron-sulfur cluster assembly protein CyaY from Pseudomonas putida (strain ATCC 700007 / DSM 6899 / JCM 31910 / BCRC 17059 / LMG 24140 / F1).